Here is a 328-residue protein sequence, read N- to C-terminus: UPF0104 membrane protein AF_2231 (328 aa).

Helical transmembrane passes span 31 to 51, 116 to 136, 139 to 159, 221 to 241, 245 to 265, and 277 to 297; these read NWLL…LWAL, ILDS…TGFS, FGFK…YILY, LVTL…LVAL, AYFL…LVPL, and MAYL…VGLW.

This sequence belongs to the UPF0104 family.

Its subcellular location is the cell membrane. The polypeptide is UPF0104 membrane protein AF_2231 (Archaeoglobus fulgidus (strain ATCC 49558 / DSM 4304 / JCM 9628 / NBRC 100126 / VC-16)).